A 340-amino-acid chain; its full sequence is MSELDQLRQEAEQLKNQIRDARKACADATLSQITNNIDPVGRIQMRTRRTLRGHLAKIYAMHWGTDSRLLVSASQDGKLIIWDSYTTNKVHAIPLRSSWVMTCAYAPSGNYVACGGLDNICSIYNLKTREGNVRVSRELAGHTGYLSCCRFLDDNQIVTSSGDTTCALWDIETGQQTTTFTGHTGDVMSLSLAPDTRLFVSGACDASAKLWDVREGMCRQTFTGHESDINAICFFPNGNAFATGSDDATCRLFDLRADQELMTYSHDNIICGITSVSFSKSGRLLLAGYDDFNCNVWDALKADRAGVLAGHDDRVSCLGVTDDGMAVATGSWDSFLKIWN.

Ser2 is modified (N-acetylserine). Ser2 carries the phosphoserine modification. WD repeat units lie at residues 46-94, 95-140, 141-181, 182-223, 224-267, 268-309, and 310-340; these read RTRR…HAIP, LRSS…RELA, GHTG…TTFT, GHTG…QTFT, GHES…YSHD, NIIC…GVLA, and GHDD…KIWN. Position 266 is a phosphohistidine (His266).

It belongs to the WD repeat G protein beta family. G proteins are composed of 3 units, alpha, beta and gamma. The heterodimer formed by GNB1 and GNG2 interacts with ARHGEF5. The heterodimer formed by GNB1 and GNG2 interacts with GRK2. Forms a complex with GNAO1 and GNG3. Interacts with ARHGEF18 and RASD2. Forms complexes with TAS2R14 and G-proteins; these complexes play a role in the perception of bitterness. Component of the TAS2R14-GNAI1 complex, consisting of TAS2R14, GNAI1, GNB1 and GNG2. Component of the TAS2R14-GNAT3 complex, consisting of TAS2R14, GNAT3, GNB1 and GNG2. Component of the TAS2R14-GNAS2 complex, consisting of TAS2R14, GNAS2, GNB1 and GNG2. Post-translationally, phosphorylation at His-266 by NDKB contributes to G protein activation by increasing the high energetic phosphate transfer onto GDP.

In terms of biological role, guanine nucleotide-binding proteins (G proteins) are involved as a modulator or transducer in various transmembrane signaling systems. The beta and gamma chains are required for the GTPase activity, for replacement of GDP by GTP, and for G protein-effector interaction. In Pongo abelii (Sumatran orangutan), this protein is Guanine nucleotide-binding protein G(I)/G(S)/G(T) subunit beta-1 (GNB1).